Here is a 368-residue protein sequence, read N- to C-terminus: Zinc finger protein 24 (368 aa).

Lys-22 participates in a covalent cross-link: Glycyl lysine isopeptide (Lys-Gly) (interchain with G-Cter in SUMO2). A Glycyl lysine isopeptide (Lys-Gly) (interchain with G-Cter in SUMO1); alternate cross-link involves residue Lys-27. A Glycyl lysine isopeptide (Lys-Gly) (interchain with G-Cter in SUMO2); alternate cross-link involves residue Lys-27. Residues 52–134 enclose the SCAN box domain; the sequence is RQRFRQFGYQ…TVLEDLESEL (83 aa). Residues Ser-132 and Ser-142 each carry the phosphoserine modification. Glycyl lysine isopeptide (Lys-Gly) (interchain with G-Cter in SUMO2) cross-links involve residues Lys-147, Lys-177, and Lys-236. The C2H2-type 1 zinc finger occupies 251 to 273; that stretch reads HICDECGKHFSQGSALILHQRIH. A necessary and sufficient for nuclear localization region spans residues 251–301; that stretch reads HICDECGKHFSQGSALILHQRIHSGEKPYGCVECGKAFSRSSILVQHQRVH. At Ser-274 the chain carries Phosphoserine. Residues Lys-277 and Lys-286 each participate in a glycyl lysine isopeptide (Lys-Gly) (interchain with G-Cter in SUMO2) cross-link. 3 consecutive C2H2-type zinc fingers follow at residues 279 to 301, 307 to 329, and 335 to 357; these read YGCVECGKAFSRSSILVQHQRVH, YKCLECGKAFSQNSGLINHQRIH, and YECVQCGKSYSQSSNLFRHQRRH. At Ser-292 the chain carries Phosphoserine. At Tyr-335 the chain carries Phosphotyrosine. Residues Lys-361 and Lys-367 each participate in a glycyl lysine isopeptide (Lys-Gly) (interchain with G-Cter in SUMO2) cross-link.

It belongs to the krueppel C2H2-type zinc-finger protein family. Sumoylated. As to expression, expressed in many tissues except in heart.

The protein localises to the nucleus. Functionally, transcription factor required for myelination of differentiated oligodendrocytes. Required for the conversion of oligodendrocytes from the premyelinating to the myelinating state. In the developing central nervous system (CNS), involved in the maintenance in the progenitor stage by promoting the cell cycle. Specifically binds to the 5'-TCAT-3' DNA sequence. Has transcription repressor activity in vitro. The polypeptide is Zinc finger protein 24 (ZNF24) (Homo sapiens (Human)).